Here is a 1441-residue protein sequence, read N- to C-terminus: Pleiotropic drug resistance protein TUR2 (1441 aa).

The ABC transporter 1 domain maps to 158–430; the sequence is LSALHLMPSG…FESMGFKCPE (273 aa). Position 191–198 (191–198) interacts with ATP; that stretch reads GPPGAGKT. An ABC transmembrane type-2 1 domain is found at 508 to 721; that stretch reads ELLKACIDRE…AQNAIAVNEF (214 aa). Helical transmembrane passes span 526–546, 559–579, 614–634, 646–666, 671–691, and 756–776; these read FVYI…MTVF, ATIF…NGFA, IPIS…VIGF, LLLV…AAVG, VADT…GFII, and IGVG…ILFL. The ABC transporter 2 domain occupies 843 to 1095; that stretch reads ITFDNVKYSV…HLIKYFESID (253 aa). 888 to 895 lines the ATP pocket; that stretch reads GVSGRGKT. In terms of domain architecture, ABC transmembrane type-2 2 spans 1168-1382; sequence MQCLACLWKQ…TLYGLVVSQF (215 aa). Transmembrane regions (helical) follow at residues 1187–1207, 1215–1235, 1275–1295, 1302–1322, 1332–1352, 1363–1383, and 1413–1433; these read YTAT…TIFW, TSLD…FIGI, VPHI…MIGF, FLWY…YGMM, IAAI…GFII, WYYW…SQFG, and VVGV…AFSI.

Belongs to the ABC transporter superfamily. ABCG family. PDR (TC 3.A.1.205) subfamily. As to expression, ubiquitous.

Its subcellular location is the cell membrane. Its function is as follows. May be a general defense protein. Seems involved in turion (dormant buds) formation. Confers resistance to the diterpenoid antifungal agent sclareol. The sequence is that of Pleiotropic drug resistance protein TUR2 (TUR2) from Spirodela polyrhiza (Giant duckweed).